Consider the following 105-residue polypeptide: Oxytocin-neurophysin 1 (105 aa).

A disulfide bridge connects residues Cys-1 and Cys-6. Gly-9 bears the Glycine amide mark. Cystine bridges form between Cys-22/Cys-66, Cys-25/Cys-39, Cys-33/Cys-56, Cys-40/Cys-46, Cys-73/Cys-85, Cys-79/Cys-97, and Cys-86/Cys-91.

The protein belongs to the vasopressin/oxytocin family. As to quaternary structure, interacts with oxytocin receptor (Ki=1.5 nM). Interacts with vasopressin V1aR/AVPR1A (Ki=37 nM), V1bR/AVPR1B (Ki=222 nM), and V2R/AVPR2 receptors (Ki=823 nM).

The protein localises to the secreted. Functionally, neurophysin 1 specifically binds oxytocin. Its function is as follows. Oxytocin causes contraction of the smooth muscle of the uterus and of the mammary gland. Acts by binding to oxytocin receptor (OXTR). The protein is Oxytocin-neurophysin 1 (OXT) of Equus caballus (Horse).